The chain runs to 1278 residues: ABC transporter B family member 11 (1278 aa).

Basic and acidic residues-rich tracts occupy residues 1-13 (MNGDGAREGDSVS) and 21-35 (SPKEGEETKKEEKSE). Positions 1–35 (MNGDGAREGDSVSHEPSTSKSPKEGEETKKEEKSE) are disordered. The next 6 helical transmembrane spans lie at 55-75 (VLLMICGSIGAIGNGMSLPFM), 106-126 (FVYLGLGTLGAAFLQVACWMI), 182-202 (FIQLVSTFVGGFVLAFIKGWL), 205-225 (LVMLTSIPLLAMAGAAMALIV), 285-305 (GLGLGVMFFVFFSSYALAIWF), and 314-334 (GYTGGAVINVIIIVVAGSMSL). One can recognise an ABC transmembrane type-1 1 domain in the interval 58–346 (MICGSIGAIG…TSPCVTAFAA (289 aa)). The ABC transporter 1 domain occupies 381–617 (IELKDVHFSY…SEGAYSQLIR (237 aa)). 416–423 (GESGSGKS) is a binding site for ATP. 3 N-linked (GlcNAc...) asparagine glycosylation sites follow: N483, N568, and N653. A compositionally biased stretch (polar residues) spans 629–654 (ELSSGSSFRNSNLKKSMEGTSSVGNS). Residues 629-656 (ELSSGSSFRNSNLKKSMEGTSSVGNSSR) are disordered. In terms of domain architecture, ABC transmembrane type-1 2 spans 710-997 (LLLGTVAAAI…SSTFAPDSSK (288 aa)). The next 2 helical transmembrane spans lie at 711–731 (LLGTVAAAINGAIFPLFGILI) and 751–771 (FWAIIFVALGVTSLIVSPTQM). N-linked (GlcNAc...) asparagine glycosylation occurs at N806. 4 consecutive transmembrane segments (helical) span residues 824 to 844 (ALVGDALSLAVQNVASAASGL), 845 to 865 (IIAFTASWELALIILVMLPLI), 932 to 952 (GFISGLGFGFSFFILFCVYAT), and 971 to 991 (VFQVFFALTMAAIGISQSSTF). The region spanning 1032–1271 (IELRHLSFTY…EGGVYASLVQ (240 aa)) is the ABC transporter 2 domain. Position 1067-1074 (1067-1074 (GESGSGKS)) interacts with ATP. N1121 and N1222 each carry an N-linked (GlcNAc...) asparagine glycan.

It belongs to the ABC transporter superfamily. ABCB family. Multidrug resistance exporter (TC 3.A.1.201) subfamily. In terms of tissue distribution, present in roots and flower buds.

It localises to the membrane. The catalysed reaction is (indol-3-yl)acetate(in) + ATP + H2O = (indol-3-yl)acetate(out) + ADP + phosphate + H(+). In terms of biological role, involved in the regulation of auxin transport required for pistil elongation. In Arabidopsis thaliana (Mouse-ear cress), this protein is ABC transporter B family member 11.